Reading from the N-terminus, the 486-residue chain is ATP synthase subunit beta (486 aa).

164 to 171 (GGAGVGKT) lines the ATP pocket.

The protein belongs to the ATPase alpha/beta chains family. In terms of assembly, F-type ATPases have 2 components, CF(1) - the catalytic core - and CF(0) - the membrane proton channel. CF(1) has five subunits: alpha(3), beta(3), gamma(1), delta(1), epsilon(1). CF(0) has four main subunits: a(1), b(1), b'(1) and c(9-12).

It localises to the cellular thylakoid membrane. It carries out the reaction ATP + H2O + 4 H(+)(in) = ADP + phosphate + 5 H(+)(out). Its function is as follows. Produces ATP from ADP in the presence of a proton gradient across the membrane. The catalytic sites are hosted primarily by the beta subunits. The polypeptide is ATP synthase subunit beta (Prochlorococcus marinus (strain MIT 9215)).